The following is a 35-amino-acid chain: MEALVYTFLLVGTLGIIFFAIFFREPPKIEVKEKK.

A helical membrane pass occupies residues 3–23; that stretch reads ALVYTFLLVGTLGIIFFAIFF.

This sequence belongs to the PsbT family. PSII is composed of 1 copy each of membrane proteins PsbA, PsbB, PsbC, PsbD, PsbE, PsbF, PsbH, PsbI, PsbJ, PsbK, PsbL, PsbM, PsbT, PsbY, PsbZ, Psb30/Ycf12, at least 3 peripheral proteins of the oxygen-evolving complex and a large number of cofactors. It forms dimeric complexes.

The protein localises to the plastid. It localises to the chloroplast thylakoid membrane. Its function is as follows. Found at the monomer-monomer interface of the photosystem II (PS II) dimer, plays a role in assembly and dimerization of PSII. PSII is a light-driven water plastoquinone oxidoreductase, using light energy to abstract electrons from H(2)O, generating a proton gradient subsequently used for ATP formation. The chain is Photosystem II reaction center protein T from Zygnema circumcarinatum (Green alga).